The chain runs to 331 residues: Adenosine deaminase (331 aa).

Residues His-12 and His-14 each coordinate Zn(2+). Substrate contacts are provided by His-14, Asp-16, and Gly-170. His-197 provides a ligand contact to Zn(2+). Glu-200 (proton donor) is an active-site residue. Asp-278 is a binding site for Zn(2+). Residue Asp-279 coordinates substrate.

The protein belongs to the metallo-dependent hydrolases superfamily. Adenosine and AMP deaminases family. Adenosine deaminase subfamily. Zn(2+) is required as a cofactor.

It carries out the reaction adenosine + H2O + H(+) = inosine + NH4(+). The catalysed reaction is 2'-deoxyadenosine + H2O + H(+) = 2'-deoxyinosine + NH4(+). In terms of biological role, catalyzes the hydrolytic deamination of adenosine and 2-deoxyadenosine. The polypeptide is Adenosine deaminase (Shewanella denitrificans (strain OS217 / ATCC BAA-1090 / DSM 15013)).